A 943-amino-acid polypeptide reads, in one-letter code: MAENKDVSQVLNTTPDQVVINRAPPTGLAPLRHSQLSDSGAESCYEGDEQARLIRSSSSRAHKFIIIPATPGTPPGSGAVAGPLPFRQTSSTTSLAAMAAALHKQSPLRHTSVRTRPSSEVLQPGQVLANQPTAAVSTSTVTFTIDDCNEEGDAIPAAASVPAPVTMPAISPTPATLTCTTTTTMAGDSVAVSPLSMELKSRLGSHHSSMRSVVSGYLPGLSDSSGNLVGGVSMATSGLQAPNPLYMQPQASLSGSSYHFHELAGNQIYSDVTSVRSLASIGIGSTDGRKLVIRRVPTTANELFDMVNPQTPPPLGVDDDDSYLDMSDETAQLKPRQQHWANKMQFVLACIGYSVGLGNVWRFPYMCYKSGGGVFLVPYCIILFICSIPLLFMELSVGQYTGRGPIGALGQLCPLFKGAGLASVVVSFLMSTYYSVIIGYSIYYFFTSFKTEMPWIDCNNRWNTPDCWVPQRKGINASAPDTSRTPSEEFFENKVLQISGGLEYPGMMRWELFACLICAWLMVYFATWKSIKSSAKVRYFTATFPFVLIIILMVRAVTLDGAAEGLRFFFRPKWSELKNANVWINAASQNFNSLGITFGSMISFASYNKYNNNILRDTVAVSAVNMITSLLVGIFAFSTLGNLALEQNTNVRDVIGDGPGMIFVVYPQAMAKMPYAQLWAVMFFFMLLCLGLNSQFAIVEVVVTSIQDGFPRWIKRHLGYHEIVVLFVCVISCLFGMPNIIQGGIYYFQLMDHYAASVTIMFLAFCQMIAIAWFYGTGRLSKNVKQMTGKAPSFYLRSCWLVLGPCLLFAIWVLSLINYHEPTYHNGRYTYPDWAYGIGWMFASFSLICIPGYAVINFLRSSGDTFWERIRNTLRPNIYECKICGEHHCEHDYPEQEQFMLAQEMATVYKPTNPHLLNLGQKCGYNAMQASPSHAEAGGPCGQ.

The Cytoplasmic segment spans residues 1–345 (MAENKDVSQV…RQQHWANKMQ (345 aa)). The disordered stretch occupies residues 103-122 (HKQSPLRHTSVRTRPSSEVL). The next 3 membrane-spanning stretches (helical) occupy residues 346-366 (FVLA…FPYM), 373-393 (GVFL…LLFM), and 418-438 (GAGL…SVII). Topologically, residues 439–510 (GYSIYYFFTS…GLEYPGMMRW (72 aa)) are extracellular. The N-linked (GlcNAc...) asparagine glycan is linked to asparagine 476. A run of 9 helical transmembrane segments spans residues 511–531 (ELFA…WKSI), 539–559 (YFTA…AVTL), 591–607 (FNSL…FASY), 618–638 (TVAV…FAFS), 679–699 (WAVM…FAIV), 723–743 (IVVL…IIQG), 754–774 (YAAS…IAWF), 799–819 (CWLV…LINY), and 836–856 (YGIG…YAVI). Over 857 to 943 (NFLRSSGDTF…HAEAGGPCGQ (87 aa)) the chain is Cytoplasmic.

It belongs to the sodium:neurotransmitter symporter (SNF) (TC 2.A.22) family. In terms of tissue distribution, expressed both maternally and zygotically. Developing embryos exhibit expression in the posterior hindgut, foregut, midgut, Malpighian tubules, anal plate, Garland cells, and a subset of cells in the central nervous system. Central nervous system expression is seen in segmentally repeating in cells flanking the midline of the ventral ganglion. Isoform A and isoform B are colocalized in both the nervous system and the fluid reabsorption system.

It is found in the membrane. Its function is as follows. Plays a role in neuronal membrane excitation, important for normal response properties of the photoreceptor. Able to control excitability from either neurons or glia cells. Ine negatively regulates neuronal sodium channels. Controls neurotransmitter-mediated signaling pathways associated with the structure of the larval peripheral nerve, ine and eag control perineurial glial growth through partially redundant pathways. Isoform A and isoform B are both functional, although isoform A functions with greater efficiency. Has a role in osmolyte transport within the Malpighian tubule and hindgut. The protein is Sodium- and chloride-dependent GABA transporter ine of Drosophila melanogaster (Fruit fly).